The following is a 245-amino-acid chain: Carbohydrate deacetylase (245 aa).

Positions 59 and 121 each coordinate Mg(2+).

The protein belongs to the YdjC deacetylase family. In terms of assembly, homodimer. Mg(2+) is required as a cofactor.

Probably catalyzes the deacetylation of acetylated carbohydrates an important step in the degradation of oligosaccharides. In Clostridium beijerinckii (strain ATCC 51743 / NCIMB 8052) (Clostridium acetobutylicum), this protein is Carbohydrate deacetylase.